The primary structure comprises 491 residues: FAD-dependent monooxygenase cle3 (491 aa).

FAD-binding residues include Glu55, Gly69, Arg128, Asp330, and Ala343. N-linked (GlcNAc...) asparagine glycosylation is present at Asn380. A helical transmembrane segment spans residues 462-482 (STVVWTSLGILGLVVFLFLLF).

It belongs to the paxM FAD-dependent monooxygenase family. FAD is required as a cofactor.

It is found in the membrane. Its pathway is secondary metabolite biosynthesis; terpenoid biosynthesis. FAD-dependent monooxygenase; part of the cluster A that mediates the biosynthesis of chevalone E and its oxidized derivatives that possess a unique five-membered lactone ring and can synergistically enhance the cytotoxicity of doxorubicin (DOX) in breast cancer cells. Within the pathway, cle3 takes part to the biosynthesis of the molecular scaffold by catalyzing the formation of an (S)-epoxide ring at the terminal olefin of the geranylgeranyl group. The molecular scaffold is commonly biosynthesized by a series of enzymes including the non-reducing polyketide synthase (NR-PKS) cle1 that produces the alpha-pyrone triacetic acid lactone (TAL); The membrane-bound prenyltransferase cle5 that accepts TAL as its substrate to perform a C-3 geranylgeranylation reaction, in which the pathway-dedicated GGPS cle6 is required to provide GGPP, the other substrate of cle5; the FAD-dependent monooxygenase Cle3 that forms an (S)-epoxide ring at the terminal olefin of the geranylgeranyl group; and the terpene cyclase Cle7 that catalyzes the cyclization of the prenyl group that yields the pentacyclic pathway intermediate chevalone E. Chevalone E can derivatize into seven new oxidized analogs by the cytochrome P450 monooxygenases cle2 (acting at C-20) and cle4 (acting at C-11 and C-12). This chain is FAD-dependent monooxygenase cle3, found in Aspergillus versicolor.